We begin with the raw amino-acid sequence, 101 residues long: Protein Tat (101 aa).

Positions 1-10 are enriched in basic and acidic residues; the sequence is MEPVDPRLEP. A disordered region spans residues 1-20; that stretch reads MEPVDPRLEPWNHPGSQPKT. The interaction with human CREBBP stretch occupies residues 1–24; it reads MEPVDPRLEPWNHPGSQPKTACNN. The interval 1–48 is transactivation; sequence MEPVDPRLEPWNHPGSQPKTACNNCYCKRCCYHCLYCFTKKGLGISYG. Zn(2+) contacts are provided by Cys-22, Cys-25, and Cys-27. Positions 22-37 are cysteine-rich; sequence CNNCYCKRCCYHCLYC. Lys-28 carries the post-translational modification N6-acetyllysine; by host PCAF. The Zn(2+) site is built by Cys-30, His-33, Cys-34, and Cys-37. Positions 38–48 are core; it reads FTKKGLGISYG. Basic residues predominate over residues 48–58; that stretch reads GRKKRSQRRRT. Residues 48-101 are disordered; it reads GRKKRSQRRRTPQSSKSHQDLIPEQPLSQQQGDQTGQKKQKEALESKTEADPCD. Positions 49–57 match the Nuclear localization signal, RNA-binding (TAR), and protein transduction motif; the sequence is RKKRSQRRR. An interaction with the host capping enzyme RNGTT region spans residues 49–86; the sequence is RKKRSQRRRTPQSSKSHQDLIPEQPLSQQQGDQTGQKK. Lys-50 and Lys-51 each carry N6-acetyllysine; by host EP300 and GCN5L2. Asymmetric dimethylarginine; by host PRMT6 is present on Arg-52. The span at 86-101 shows a compositional bias: basic and acidic residues; the sequence is KQKEALESKTEADPCD.

The protein belongs to the lentiviruses Tat family. Interacts with host CCNT1. Associates with the P-TEFb complex composed at least of Tat, P-TEFb (CDK9 and CCNT1), TAR RNA, RNA Pol II. Recruits the HATs CREBBP, TAF1/TFIID, EP300, PCAF and GCN5L2. Interacts with host KAT5/Tip60; this interaction targets the latter to degradation. Interacts with the host deacetylase SIRT1. Interacts with host capping enzyme RNGTT; this interaction stimulates RNGTT. Binds to host KDR, and to the host integrins ITGAV/ITGB3 and ITGA5/ITGB1. Interacts with host KPNB1/importin beta-1 without previous binding to KPNA1/importin alpha-1. Interacts with EIF2AK2. Interacts with host nucleosome assembly protein NAP1L1; this interaction may be required for the transport of Tat within the nucleus, since the two proteins interact at the nuclear rim. Interacts with host C1QBP/SF2P32; this interaction involves lysine-acetylated Tat. Interacts with the host chemokine receptors CCR2, CCR3 and CXCR4. Interacts with host DPP4/CD26; this interaction may trigger an anti-proliferative effect. Interacts with host LDLR. Interacts with the host extracellular matrix metalloproteinase MMP1. Interacts with host PRMT6; this interaction mediates Tat's methylation. Interacts with, and is ubiquitinated by MDM2/Hdm2. Interacts with host PSMC3 and HTATIP2. Interacts with STAB1; this interaction may overcome SATB1-mediated repression of IL2 and IL2RA (interleukin) in T cells by binding to the same domain than HDAC1. Interacts (when acetylated) with human CDK13, thereby increasing HIV-1 mRNA splicing and promoting the production of the doubly spliced HIV-1 protein Nef. Interacts with host TBP; this interaction modulates the activity of transcriptional pre-initiation complex. Interacts with host RELA. Interacts with host PLSCR1; this interaction negatively regulates Tat transactivation activity by altering its subcellular distribution. In terms of processing, asymmetrical arginine methylation by host PRMT6 seems to diminish the transactivation capacity of Tat and affects the interaction with host CCNT1. Acetylation by EP300, CREBBP, GCN5L2/GCN5 and PCAF regulates the transactivation activity of Tat. EP300-mediated acetylation of Lys-50 promotes dissociation of Tat from the TAR RNA through the competitive binding to PCAF's bromodomain. In addition, the non-acetylated Tat's N-terminus can also interact with PCAF. PCAF-mediated acetylation of Lys-28 enhances Tat's binding to CCNT1. Lys-50 is deacetylated by SIRT1. Post-translationally, polyubiquitination by host MDM2 does not target Tat to degradation, but activates its transactivation function and fosters interaction with CCNT1 and TAR RNA. In terms of processing, phosphorylated by EIF2AK2 on serine and threonine residues adjacent to the basic region important for TAR RNA binding and function. Phosphorylation of Tat by EIF2AK2 is dependent on the prior activation of EIF2AK2 by dsRNA.

The protein resides in the host nucleus. It is found in the host nucleolus. The protein localises to the host cytoplasm. It localises to the secreted. Transcriptional activator that increases RNA Pol II processivity, thereby increasing the level of full-length viral transcripts. Recognizes a hairpin structure at the 5'-LTR of the nascent viral mRNAs referred to as the transactivation responsive RNA element (TAR) and recruits the cyclin T1-CDK9 complex (P-TEFb complex) that will in turn hyperphosphorylate the RNA polymerase II to allow efficient elongation. The CDK9 component of P-TEFb and other Tat-activated kinases hyperphosphorylate the C-terminus of RNA Pol II that becomes stabilized and much more processive. Other factors such as HTATSF1/Tat-SF1, SUPT5H/SPT5, and HTATIP2 are also important for Tat's function. Besides its effect on RNA Pol II processivity, Tat induces chromatin remodeling of proviral genes by recruiting the histone acetyltransferases (HATs) CREBBP, EP300 and PCAF to the chromatin. This also contributes to the increase in proviral transcription rate, especially when the provirus integrates in transcriptionally silent region of the host genome. To ensure maximal activation of the LTR, Tat mediates nuclear translocation of NF-kappa-B by interacting with host RELA. Through its interaction with host TBP, Tat may also modulate transcription initiation. Tat can reactivate a latently infected cell by penetrating in it and transactivating its LTR promoter. In the cytoplasm, Tat is thought to act as a translational activator of HIV-1 mRNAs. Functionally, extracellular circulating Tat can be endocytosed by surrounding uninfected cells via the binding to several surface receptors such as CD26, CXCR4, heparan sulfate proteoglycans (HSPG) or LDLR. Neurons are rarely infected, but they internalize Tat via their LDLR. Through its interaction with nuclear HATs, Tat is potentially able to control the acetylation-dependent cellular gene expression. Modulates the expression of many cellular genes involved in cell survival, proliferation or in coding for cytokines or cytokine receptors. Tat plays a role in T-cell and neurons apoptosis. Tat induced neurotoxicity and apoptosis probably contribute to neuroAIDS. Circulating Tat also acts as a chemokine-like and/or growth factor-like molecule that binds to specific receptors on the surface of the cells, affecting many cellular pathways. In the vascular system, Tat binds to ITGAV/ITGB3 and ITGA5/ITGB1 integrins dimers at the surface of endothelial cells and competes with bFGF for heparin-binding sites, leading to an excess of soluble bFGF. The polypeptide is Protein Tat (Homo sapiens (Human)).